The sequence spans 194 residues: ATP-dependent Clp protease proteolytic subunit (194 aa).

Ser-97 serves as the catalytic Nucleophile. Residue His-122 is part of the active site.

The protein belongs to the peptidase S14 family. In terms of assembly, fourteen ClpP subunits assemble into 2 heptameric rings which stack back to back to give a disk-like structure with a central cavity, resembling the structure of eukaryotic proteasomes.

Its subcellular location is the cytoplasm. The catalysed reaction is Hydrolysis of proteins to small peptides in the presence of ATP and magnesium. alpha-casein is the usual test substrate. In the absence of ATP, only oligopeptides shorter than five residues are hydrolyzed (such as succinyl-Leu-Tyr-|-NHMec, and Leu-Tyr-Leu-|-Tyr-Trp, in which cleavage of the -Tyr-|-Leu- and -Tyr-|-Trp bonds also occurs).. Its function is as follows. Cleaves peptides in various proteins in a process that requires ATP hydrolysis. Has a chymotrypsin-like activity. Plays a major role in the degradation of misfolded proteins. This Campylobacter jejuni subsp. jejuni serotype O:23/36 (strain 81-176) protein is ATP-dependent Clp protease proteolytic subunit.